Here is a 282-residue protein sequence, read N- to C-terminus: Acetyl-coenzyme A carboxylase carboxyl transferase subunit beta (282 aa).

The CoA carboxyltransferase N-terminal domain maps to 26 to 282 (QWVKCPETGE…IIRLLNLLME (257 aa)).

Belongs to the AccD/PCCB family. As to quaternary structure, acetyl-CoA carboxylase is a heterohexamer composed of biotin carboxyl carrier protein (AccB), biotin carboxylase (AccC) and two subunits each of ACCase subunit alpha (AccA) and ACCase subunit beta (AccD).

Its subcellular location is the cytoplasm. It catalyses the reaction N(6)-carboxybiotinyl-L-lysyl-[protein] + acetyl-CoA = N(6)-biotinyl-L-lysyl-[protein] + malonyl-CoA. The protein operates within lipid metabolism; malonyl-CoA biosynthesis; malonyl-CoA from acetyl-CoA: step 1/1. Functionally, component of the acetyl coenzyme A carboxylase (ACC) complex. Biotin carboxylase (BC) catalyzes the carboxylation of biotin on its carrier protein (BCCP) and then the CO(2) group is transferred by the transcarboxylase to acetyl-CoA to form malonyl-CoA. The sequence is that of Acetyl-coenzyme A carboxylase carboxyl transferase subunit beta from Salinibacter ruber (strain DSM 13855 / M31).